Here is a 240-residue protein sequence, read N- to C-terminus: Putative S-adenosylmethionine-dependent methyltransferase RcsF (240 aa).

A TsaA-like domain is found at 5–142 (ISPIGHVRSC…YVPYADIVPD (138 aa)). S-adenosyl-L-methionine contacts are provided by residues 22–24 (PRQ), 63–64 (HQ), Arg91, and 122–125 (LDGT).

The protein belongs to the tRNA methyltransferase O family.

The sequence is that of Putative S-adenosylmethionine-dependent methyltransferase RcsF (rcsF) from Pseudomonas aeruginosa.